The following is a 444-amino-acid chain: Trimethylamine monooxygenase (444 aa).

Cys-12, Glu-37, Gln-39, Leu-45, and Trp-46 together coordinate FAD. Residues Trp-70 and Asn-72 each coordinate NADP(+). Residues Asn-72 and Val-125 each coordinate FAD. Tyr-170, Ser-202, Ser-203, Ser-205, Arg-226, His-227, and Asn-288 together coordinate NADP(+). Positions 315 and 318 each coordinate FAD. Residue Arg-409 participates in NADP(+) binding.

This sequence belongs to the FMO family. In terms of assembly, homodimer. Requires FAD as cofactor.

It catalyses the reaction trimethylamine + NADPH + O2 = trimethylamine N-oxide + NADP(+) + H2O. In terms of biological role, catalyzes the oxidation of trimethylamine (TMA) to produce trimethylamine N-oxide (TMAO). In vitro, has a broad substrate specificity, oxidizing many nitrogen- and sulfur-containing compounds, including dimethylamine (DMA), dimethylsulfide (DMS), dimethylsulfoxide (DMSO) and methimazole. TMA shows the highest affinity. This is Trimethylamine monooxygenase from Pelagibacter sp. (strain HTCC7211).